The primary structure comprises 443 residues: ATP-dependent protease ATPase subunit HslU (443 aa).

ATP is bound by residues Ile18, Gly60–Glu65, Asp256, Glu321, and Arg393.

This sequence belongs to the ClpX chaperone family. HslU subfamily. As to quaternary structure, a double ring-shaped homohexamer of HslV is capped on each side by a ring-shaped HslU homohexamer. The assembly of the HslU/HslV complex is dependent on binding of ATP.

Its subcellular location is the cytoplasm. Functionally, ATPase subunit of a proteasome-like degradation complex; this subunit has chaperone activity. The binding of ATP and its subsequent hydrolysis by HslU are essential for unfolding of protein substrates subsequently hydrolyzed by HslV. HslU recognizes the N-terminal part of its protein substrates and unfolds these before they are guided to HslV for hydrolysis. This chain is ATP-dependent protease ATPase subunit HslU, found in Shigella boydii serotype 18 (strain CDC 3083-94 / BS512).